The sequence spans 357 residues: MSLTRLLIKDFRNIENADLALSPGFNFLVGANGSGKTSVLEAIYTLGHGRAFRSLQPGRVIRHEQEAFVLHGRLQGEEREMSIGLTKDKQGDSKVRIDGTDGHKIAELAHLMPMQLITPEGFTLLNGGPKYRRAFLDWGCFHNEAGFFTAWSNLKRLLKQRNAALRQVSRYEQLRPWDKELIPLAEQISTWRAEYSSAIAQDMADTCQQFLPEFSLTFSFQRGWEKETDYADVLERSFERDRMLTYTAHGPHKADFRIRADGAPVEDTLSRGQLKLLMCALRLAQGEFLTRESGRRCLYLIDDFASELDDARRGLLASRLKATQSQVFVSAISAEHVIDMSDENSKMFTVEKGKITD.

Glycine 30 to threonine 37 is an ATP binding site.

This sequence belongs to the RecF family.

It localises to the cytoplasm. Its function is as follows. The RecF protein is involved in DNA metabolism; it is required for DNA replication and normal SOS inducibility. RecF binds preferentially to single-stranded, linear DNA. It also seems to bind ATP. In Salmonella paratyphi A (strain ATCC 9150 / SARB42), this protein is DNA replication and repair protein RecF.